The sequence spans 135 residues: Putative large ribosomal subunit protein eL32' (135 aa).

This sequence belongs to the eukaryotic ribosomal protein eL32 family.

This chain is Putative large ribosomal subunit protein eL32' (Rpl32-ps), found in Mus musculus (Mouse).